A 388-amino-acid chain; its full sequence is Succinate--CoA ligase [ADP-forming] subunit beta (388 aa).

Positions 9 to 244 (KELFARRGLP…VTQEDAREAH (236 aa)) constitute an ATP-grasp domain. ATP is bound by residues Lys46, 53–55 (GRG), Glu99, Thr102, and Glu107. Positions 199 and 213 each coordinate Mg(2+). Substrate is bound by residues Asn264 and 321–323 (GIV).

Belongs to the succinate/malate CoA ligase beta subunit family. Heterotetramer of two alpha and two beta subunits. It depends on Mg(2+) as a cofactor.

It carries out the reaction succinate + ATP + CoA = succinyl-CoA + ADP + phosphate. The catalysed reaction is GTP + succinate + CoA = succinyl-CoA + GDP + phosphate. The protein operates within carbohydrate metabolism; tricarboxylic acid cycle; succinate from succinyl-CoA (ligase route): step 1/1. Its function is as follows. Succinyl-CoA synthetase functions in the citric acid cycle (TCA), coupling the hydrolysis of succinyl-CoA to the synthesis of either ATP or GTP and thus represents the only step of substrate-level phosphorylation in the TCA. The beta subunit provides nucleotide specificity of the enzyme and binds the substrate succinate, while the binding sites for coenzyme A and phosphate are found in the alpha subunit. The protein is Succinate--CoA ligase [ADP-forming] subunit beta of Hamiltonella defensa subsp. Acyrthosiphon pisum (strain 5AT).